A 627-amino-acid chain; its full sequence is 1-deoxy-D-xylulose-5-phosphate synthase (627 aa).

Thiamine diphosphate contacts are provided by residues His-74 and 115–117 (GHA). Asp-146 lines the Mg(2+) pocket. Residues 147–148 (AA), Asn-175, Phe-284, and Glu-364 contribute to the thiamine diphosphate site. Position 175 (Asn-175) interacts with Mg(2+).

It belongs to the transketolase family. DXPS subfamily. Homodimer. It depends on Mg(2+) as a cofactor. Thiamine diphosphate is required as a cofactor.

The catalysed reaction is D-glyceraldehyde 3-phosphate + pyruvate + H(+) = 1-deoxy-D-xylulose 5-phosphate + CO2. It participates in metabolic intermediate biosynthesis; 1-deoxy-D-xylulose 5-phosphate biosynthesis; 1-deoxy-D-xylulose 5-phosphate from D-glyceraldehyde 3-phosphate and pyruvate: step 1/1. Catalyzes the acyloin condensation reaction between C atoms 2 and 3 of pyruvate and glyceraldehyde 3-phosphate to yield 1-deoxy-D-xylulose-5-phosphate (DXP). This is 1-deoxy-D-xylulose-5-phosphate synthase from Acidobacterium capsulatum (strain ATCC 51196 / DSM 11244 / BCRC 80197 / JCM 7670 / NBRC 15755 / NCIMB 13165 / 161).